A 231-amino-acid chain; its full sequence is ATP phosphoribosyltransferase (231 aa).

It belongs to the ATP phosphoribosyltransferase family. Short subfamily. As to quaternary structure, heteromultimer composed of HisG and HisZ subunits.

Its subcellular location is the cytoplasm. It catalyses the reaction 1-(5-phospho-beta-D-ribosyl)-ATP + diphosphate = 5-phospho-alpha-D-ribose 1-diphosphate + ATP. The protein operates within amino-acid biosynthesis; L-histidine biosynthesis; L-histidine from 5-phospho-alpha-D-ribose 1-diphosphate: step 1/9. Catalyzes the condensation of ATP and 5-phosphoribose 1-diphosphate to form N'-(5'-phosphoribosyl)-ATP (PR-ATP). Has a crucial role in the pathway because the rate of histidine biosynthesis seems to be controlled primarily by regulation of HisG enzymatic activity. The polypeptide is ATP phosphoribosyltransferase (Brucella anthropi (strain ATCC 49188 / DSM 6882 / CCUG 24695 / JCM 21032 / LMG 3331 / NBRC 15819 / NCTC 12168 / Alc 37) (Ochrobactrum anthropi)).